Here is a 266-residue protein sequence, read N- to C-terminus: Undecaprenyl-diphosphatase (266 aa).

The next 8 membrane-spanning stretches (helical) occupy residues 1–21 (MTLL…FLPV), 40–60 (LPLY…LVVL), 90–110 (LLVV…KPIF), 113–133 (LNQP…LWFT), 145–165 (LSWL…IPGI), 188–208 (FSFL…IDEV), 217–237 (PLLG…LWLF), and 245–265 (FKWF…KVAM).

Belongs to the UppP family.

It localises to the cell inner membrane. It catalyses the reaction di-trans,octa-cis-undecaprenyl diphosphate + H2O = di-trans,octa-cis-undecaprenyl phosphate + phosphate + H(+). Its function is as follows. Catalyzes the dephosphorylation of undecaprenyl diphosphate (UPP). Confers resistance to bacitracin. The polypeptide is Undecaprenyl-diphosphatase (Acaryochloris marina (strain MBIC 11017)).